The primary structure comprises 1388 residues: ABC transporter G family member 52 (1388 aa).

The segment at 1 to 24 (MDDAGEICSFSRSSSSAREDDEED) is disordered. The 272-residue stretch at 135-406 (TNALCITKKI…FKSVGFKCPE (272 aa)) folds into the ABC transporter 1 domain. Residue 168 to 175 (GPPGSGKT) coordinates ATP. An ABC transmembrane type-2 1 domain is found at 484–697 (ELLKANIYRE…ALNALAVNEF (214 aa)). 7 consecutive transmembrane segments (helical) span residues 503–523 (LYIFKAIQLKLVAINAMTVFI), 541–561 (ALFYGMMMIVYSALAEMGPAI), 590–610 (IPISFLNTTVWVFLTYYVIGF), 621–641 (FLVLFVLCEVIYALFRFIVAL), 646–666 (VIASNMGPFCILIFMLSCGFI), 675–695 (WWIWLYWISPLMYALNALAVN), and 732–752 (ISIGALLGYVLLFNVLYTICL). The region spanning 791–1043 (ITFEDIRYSV…ELIKYFEAIQ (253 aa)) is the ABC transporter 2 domain. Residue 836-843 (GVSGAGKT) coordinates ATP. Positions 1116-1330 (TQWLACLWKQ…TLNGLLTSQF (215 aa)) constitute an ABC transmembrane type-2 2 domain. The next 7 membrane-spanning stretches (helical) occupy residues 1136-1156 (IVVRYLFTIVVALLFGTMFWG), 1167-1183 (LFSIMGAMYSACMAMGV), 1223-1243 (FPYIFLQTIIYCVLVYAMVGY), 1250-1270 (FLWYLFFMFFTLSYFTFYGMM), 1280-1300 (MSAVVSTAFYNIWNLFSGFLI), 1305-1325 (IPVWWRWYYWMCPVAWTLNGL), and 1357-1377 (LLWVAAVAVVSFAILFAFLFG).

The protein belongs to the ABC transporter superfamily. ABCG family. PDR (TC 3.A.1.205) subfamily.

Its subcellular location is the membrane. In terms of biological role, may be a general defense protein. The polypeptide is ABC transporter G family member 52 (Oryza sativa subsp. japonica (Rice)).